The chain runs to 133 residues: Ribosome-binding factor A (133 aa).

Belongs to the RbfA family. Monomer. Binds 30S ribosomal subunits, but not 50S ribosomal subunits or 70S ribosomes.

The protein resides in the cytoplasm. One of several proteins that assist in the late maturation steps of the functional core of the 30S ribosomal subunit. Associates with free 30S ribosomal subunits (but not with 30S subunits that are part of 70S ribosomes or polysomes). Required for efficient processing of 16S rRNA. May interact with the 5'-terminal helix region of 16S rRNA. This chain is Ribosome-binding factor A, found in Nostoc sp. (strain PCC 7120 / SAG 25.82 / UTEX 2576).